The primary structure comprises 306 residues: Ubiquitin-conjugating enzyme E2Q-like protein CG4502 (306 aa).

The disordered stretch occupies residues 18 to 77 (HKSSNNNNNNNNNHNNNINNNNNNDKVDGATGSSPNINNNNNNNNNNNNHDGAAAPSSAG). 2 stretches are compositionally biased toward low complexity: residues 22 to 41 (NNNN…NNNN) and 53 to 77 (NINN…SSAG). Positions 138–299 (IRTRRLMKEY…VKTHEKYGWV (162 aa)) constitute a UBC core domain. Cys-234 serves as the catalytic Glycyl thioester intermediate.

This sequence belongs to the ubiquitin-conjugating enzyme family.

The catalysed reaction is S-ubiquitinyl-[E1 ubiquitin-activating enzyme]-L-cysteine + [E2 ubiquitin-conjugating enzyme]-L-cysteine = [E1 ubiquitin-activating enzyme]-L-cysteine + S-ubiquitinyl-[E2 ubiquitin-conjugating enzyme]-L-cysteine.. It functions in the pathway protein modification; protein ubiquitination. Functionally, catalyzes the covalent attachment of ubiquitin to other proteins. The protein is Ubiquitin-conjugating enzyme E2Q-like protein CG4502 of Drosophila melanogaster (Fruit fly).